The sequence spans 566 residues: Proline--tRNA ligase (566 aa).

This sequence belongs to the class-II aminoacyl-tRNA synthetase family. ProS type 1 subfamily. In terms of assembly, homodimer.

It is found in the cytoplasm. The catalysed reaction is tRNA(Pro) + L-proline + ATP = L-prolyl-tRNA(Pro) + AMP + diphosphate. Its function is as follows. Catalyzes the attachment of proline to tRNA(Pro) in a two-step reaction: proline is first activated by ATP to form Pro-AMP and then transferred to the acceptor end of tRNA(Pro). As ProRS can inadvertently accommodate and process non-cognate amino acids such as alanine and cysteine, to avoid such errors it has two additional distinct editing activities against alanine. One activity is designated as 'pretransfer' editing and involves the tRNA(Pro)-independent hydrolysis of activated Ala-AMP. The other activity is designated 'posttransfer' editing and involves deacylation of mischarged Ala-tRNA(Pro). The misacylated Cys-tRNA(Pro) is not edited by ProRS. This is Proline--tRNA ligase from Staphylococcus haemolyticus (strain JCSC1435).